The sequence spans 414 residues: Secernin-1 (414 aa).

Belongs to the peptidase C69 family. Secernin subfamily.

It localises to the cytoplasm. Regulates exocytosis in mast cells. Increases both the extent of secretion and the sensitivity of mast cells to stimulation with calcium. This chain is Secernin-1 (Scrn1), found in Mus musculus (Mouse).